The primary structure comprises 237 residues: Uridylate kinase (237 aa).

Residue 11–14 (KLSG) coordinates ATP. Glycine 53 lines the UMP pocket. Residues glycine 54 and arginine 58 each contribute to the ATP site. UMP contacts are provided by residues aspartate 73 and 134–141 (TGNPFFTT). The ATP site is built by threonine 161, tyrosine 167, and aspartate 170.

This sequence belongs to the UMP kinase family. Homohexamer.

It localises to the cytoplasm. The catalysed reaction is UMP + ATP = UDP + ADP. It participates in pyrimidine metabolism; CTP biosynthesis via de novo pathway; UDP from UMP (UMPK route): step 1/1. Its activity is regulated as follows. Inhibited by UTP. Its function is as follows. Catalyzes the reversible phosphorylation of UMP to UDP. This chain is Uridylate kinase, found in Paraburkholderia xenovorans (strain LB400).